We begin with the raw amino-acid sequence, 412 residues long: MIERLKIAKNRLEAMNSFNFPAQDRHERAPLLGSEYDHSMARQLSLLNVVGMTKSVLMSSYFNLMLVFVPIGLIAGWFEWNAKSVFILNMLAIIPLASLLSFATEQLSIISGPTLGALLNASFGNAIELIVGVLALKRGELRIVQSSLLGSILSNLLLVFGMCLVTTGIRREITTFNITVAQTMIAMLALSTATILIPATFHYSLPDNANSENALLHVSRGTAVIVLIVYVLLLVFQLKTHKHVCHDPSEVEEETEPRILGLRSSIAMLAIVTVFVSLCADYLVGSIDQLVEEVNISKTFVGLVILPVVGNAAEHVTAIVVSYRGQMDLALGVAIGSSIQIALFLAPFLVIVGWIISQPLTLYFESLETVILFVSVFLVNYLIQDGATHWLEGVQLLALYAIVVLAFFYYPQ.

Residues 1–55 (MIERLKIAKNRLEAMNSFNFPAQDRHERAPLLGSEYDHSMARQLSLLNVVGMTKS) lie on the Cytoplasmic side of the membrane. The helical transmembrane segment at 56–76 (VLMSSYFNLMLVFVPIGLIAG) threads the bilayer. Residues 77 to 83 (WFEWNAK) are Lumenal-facing. Residues 84 to 104 (SVFILNMLAIIPLASLLSFAT) traverse the membrane as a helical segment. At 105–114 (EQLSIISGPT) the chain is on the cytoplasmic side. The helical transmembrane segment at 115–135 (LGALLNASFGNAIELIVGVLA) threads the bilayer. Over 136–148 (LKRGELRIVQSSL) the chain is Lumenal. A helical membrane pass occupies residues 149–169 (LGSILSNLLLVFGMCLVTTGI). The Cytoplasmic segment spans residues 170-177 (RREITTFN). A helical transmembrane segment spans residues 178-198 (ITVAQTMIAMLALSTATILIP). At 199–215 (ATFHYSLPDNANSENAL) the chain is on the lumenal side. A helical membrane pass occupies residues 216-236 (LHVSRGTAVIVLIVYVLLLVF). At 237-264 (QLKTHKHVCHDPSEVEEETEPRILGLRS) the chain is on the cytoplasmic side. A helical membrane pass occupies residues 265-285 (SIAMLAIVTVFVSLCADYLVG). Over 286 to 299 (SIDQLVEEVNISKT) the chain is Lumenal. The helical transmembrane segment at 300–320 (FVGLVILPVVGNAAEHVTAIV) threads the bilayer. At 321 to 334 (VSYRGQMDLALGVA) the chain is on the cytoplasmic side. Residues 335-355 (IGSSIQIALFLAPFLVIVGWI) traverse the membrane as a helical segment. Residues 356 to 358 (ISQ) lie on the Lumenal side of the membrane. The chain crosses the membrane as a helical span at residues 359–379 (PLTLYFESLETVILFVSVFLV). The Cytoplasmic portion of the chain corresponds to 380 to 389 (NYLIQDGATH). The chain crosses the membrane as a helical span at residues 390 to 410 (WLEGVQLLALYAIVVLAFFYY). Residues 411–412 (PQ) are Lumenal-facing.

This sequence belongs to the Ca(2+):cation antiporter (CaCA) (TC 2.A.19) family.

It is found in the vacuole membrane. Its subcellular location is the endoplasmic reticulum membrane. Functionally, has a role in promoting intracellular calcium ion sequestration via the exchange of calcium ions for hydrogen ions across the vacuolar membrane. Involved also in manganese ion homeostasis via its uptake into the vacuole. The chain is Vacuolar calcium ion transporter (vcx1) from Schizosaccharomyces pombe (strain 972 / ATCC 24843) (Fission yeast).